The sequence spans 111 residues: UPF0060 membrane protein CPR_1507 (111 aa).

Helical transmembrane passes span 7–27 (IFYFLLAGVFEIGGGYLIWLW), 33–53 (SLIYGIIGALVLILYGIIPTL), 60–80 (FGRVYATYGGIFIVLSILCGW), and 85–105 (IIPDKFDLIGGFIALIGVLII).

Belongs to the UPF0060 family.

Its subcellular location is the cell membrane. The sequence is that of UPF0060 membrane protein CPR_1507 from Clostridium perfringens (strain SM101 / Type A).